We begin with the raw amino-acid sequence, 269 residues long: Serine/threonine-protein kinase ZRK7 (269 aa).

The Protein kinase domain occupies 80 to 269 (FDWSYAIGVD…KNRLMVTVIT (190 aa)). ATP contacts are provided by residues 86 to 94 (IGVDRFVWY) and lysine 106. Residue aspartate 205 is the Proton acceptor of the active site.

It belongs to the protein kinase superfamily. Ser/Thr protein kinase family. ZRK subfamily.

It carries out the reaction L-seryl-[protein] + ATP = O-phospho-L-seryl-[protein] + ADP + H(+). The catalysed reaction is L-threonyl-[protein] + ATP = O-phospho-L-threonyl-[protein] + ADP + H(+). The protein is Serine/threonine-protein kinase ZRK7 of Arabidopsis thaliana (Mouse-ear cress).